Consider the following 2172-residue polypeptide: DExH-box ATP-dependent RNA helicase DExH13 (2172 aa).

A disordered region spans residues 20–83 (YKVNSSLVLN…KSKKKKERCD (64 aa)). Residues 30-73 (SDERRRDTHESSGEPESLRGRIDPKSFGDRVVRGRPHELDERLN) are compositionally biased toward basic and acidic residues. Positions 515–698 (GTALFKADNI…FLRVDLKNGL (184 aa)) constitute a Helicase ATP-binding 1 domain. An ATP-binding site is contributed by 528–535 (APTGAGKT). Residues 640–643 (DEIH) carry the DEIH box motif. The 205-residue stretch at 742–946 (GKHQVLIFVH…NAREACHWLG (205 aa)) folds into the Helicase C-terminal 1 domain. One can recognise an SEC63 1 domain in the interval 1007–1308 (TDLGRIASYY…KWLDSPTVLP (302 aa)). The region spanning 1361-1538 (TVLYNTSDNV…WIGASSCGVF (178 aa)) is the Helicase ATP-binding 2 domain. Position 1374–1381 (1374–1381 (APTGSGKT)) interacts with ATP. The DELH box signature appears at 1480–1483 (DELH). A Helicase C-terminal 2 domain is found at 1575–1772 (AIVQHAKNKK…NFNAEVVARV (198 aa)). Residues 1840-2157 (PLNLGMIASY…YLGCDQEYSF (318 aa)) form the SEC63 2 domain.

It is found in the nucleus. The catalysed reaction is ATP + H2O = ADP + phosphate + H(+). In terms of biological role, RNA helicase that plays an essential role in pre-mRNA splicing as component of the U5 snRNP and U4/U6-U5 tri-snRNP complexes. Involved in spliceosome assembly, activation and disassembly. The protein is DExH-box ATP-dependent RNA helicase DExH13 of Arabidopsis thaliana (Mouse-ear cress).